The following is a 456-amino-acid chain: Putative alanyl-tRNA editing protein alaX (456 aa).

Zn(2+) is bound by residues histidine 125, histidine 129, cysteine 240, and histidine 244.

Belongs to the class-II aminoacyl-tRNA synthetase family. Alax-L subfamily. It depends on Zn(2+) as a cofactor.

Its function is as follows. May function in trans to edit the amino acid moiety from incorrectly charged tRNA(Ala). The sequence is that of Putative alanyl-tRNA editing protein alaX from Saccharomyces cerevisiae (strain ATCC 204508 / S288c) (Baker's yeast).